The following is an 86-amino-acid chain: MAEERNFRKVRRGYVVSDKMDKTITVELEQRSTHPLYGKVVRSTSKVKAHDEHNDAHIGDLVSIMETRPLSKTKRWRLESIIERAK.

This sequence belongs to the universal ribosomal protein uS17 family. As to quaternary structure, part of the 30S ribosomal subunit.

Functionally, one of the primary rRNA binding proteins, it binds specifically to the 5'-end of 16S ribosomal RNA. The polypeptide is Small ribosomal subunit protein uS17 (Bifidobacterium longum (strain DJO10A)).